A 699-amino-acid polypeptide reads, in one-letter code: Cell pattern formation-associated protein StuA (699 aa).

Disordered regions lie at residues 1-20 (MDGT…LLAP) and 31-97 (TPQF…QPEH). The segment covering 32-49 (PQFKSQQSQPQSQSQYPS) has biased composition (low complexity). Polar residues predominate over residues 52–61 (NPDSYSSSSP). Residues 75-84 (EDGEDYDQEE) are compositionally biased toward acidic residues. The HTH APSES-type domain occupies 226 to 332 (RVTATLWEDE…HNIGALLYHP (107 aa)). Positions 260-281 (GTKLLNVAGMTRGRRDGILKSE) form a DNA-binding region, H-T-H motif. Disordered regions lie at residues 372-594 (AMPT…MNSM), 599-618 (RRDD…DLNN), and 674-699 (PSYP…QSFG). A compositionally biased stretch (polar residues) spans 376-423 (GYTSQQPLTNGHQSMANTPQPLTNGSQPPMNGSQTPMNGPQPPMQNGG). 2 stretches are compositionally biased toward basic and acidic residues: residues 428–438 (RVREDDDDLHR) and 478–491 (GLKR…DMHR). Positions 520–529 (NLHQPLSNGD) are enriched in polar residues. Residues 535-545 (RGRDDDDDVHR) are compositionally biased toward basic and acidic residues. Over residues 566-594 (TSTSNDMLPQSPYYTLSNGAYQGPMMNSM) the composition is skewed to polar residues. A nuclear localization domain region spans residues 669 to 695 (TVAVSPSYPAGPGYELARPVTNVPRRQ).

The protein belongs to the EFG1/PHD1/stuA family.

It is found in the nucleus. Transcription factor that regulates asexual reproduction. Binds the StuA-response elements (StRE) with the consensus sequence 5'-(A/T)CGCG(T/A)N(A/C)-3' at the promoters of target genes. Controls the expression of the gene clusters involved in the production of deoxynivalenol (DON) and 15-acetyldeoxynivalenol (15ADON). Regulates the expression of genes involved in chitin and glucan metabolism. Also controls catalase activity and cell surface hydrophobicity. Plays an important role in pathogenicity. The protein is Cell pattern formation-associated protein StuA of Gibberella zeae (strain ATCC MYA-4620 / CBS 123657 / FGSC 9075 / NRRL 31084 / PH-1) (Wheat head blight fungus).